A 166-amino-acid polypeptide reads, in one-letter code: Large ribosomal subunit protein uL10 (166 aa).

The protein belongs to the universal ribosomal protein uL10 family. Part of the ribosomal stalk of the 50S ribosomal subunit. The N-terminus interacts with L11 and the large rRNA to form the base of the stalk. The C-terminus forms an elongated spine to which L12 dimers bind in a sequential fashion forming a multimeric L10(L12)X complex.

In terms of biological role, forms part of the ribosomal stalk, playing a central role in the interaction of the ribosome with GTP-bound translation factors. The protein is Large ribosomal subunit protein uL10 of Shouchella clausii (strain KSM-K16) (Alkalihalobacillus clausii).